A 393-amino-acid polypeptide reads, in one-letter code: tRNA(Met) cytidine acetate ligase (393 aa).

Positions 81, 142, and 167 each coordinate ATP.

This sequence belongs to the TmcAL family.

Its subcellular location is the cytoplasm. It carries out the reaction cytidine(34) in elongator tRNA(Met) + acetate + ATP = N(4)-acetylcytidine(34) in elongator tRNA(Met) + AMP + diphosphate. Functionally, catalyzes the formation of N(4)-acetylcytidine (ac(4)C) at the wobble position of elongator tRNA(Met), using acetate and ATP as substrates. First activates an acetate ion to form acetyladenylate (Ac-AMP) and then transfers the acetyl group to tRNA to form ac(4)C34. In Bacillus cereus (strain 03BB102), this protein is tRNA(Met) cytidine acetate ligase.